A 316-amino-acid chain; its full sequence is Oligopeptide transport system permease protein AppB (316 aa).

The next 6 helical transmembrane spans lie at 10–30, 100–120, 138–158, 177–197, 240–260, and 290–310; these read LMSIPILLGITILSFVIMKAA, LLLMLVSTILALMISIPFGVL, FIGLAIPNFWFGLILIMVLSV, IFDRIHHLILPAFVLATADMA, LPVITIFGLMIPSFIGGSVVV, and VISAVLVVVGNLIADILYAIV. In terms of domain architecture, ABC transmembrane type-1 spans 96–303; the sequence is LPNTLLLMLV…VLVVVGNLIA (208 aa).

This sequence belongs to the binding-protein-dependent transport system permease family. OppBC subfamily.

The protein localises to the cell membrane. This protein is a component of an oligopeptide permease, a binding protein-dependent transport system. This APP system can completely substitute for the OPP system in both sporulation and genetic competence, though, unlike OPP, is incapable of transporting tripeptides. Probably responsible for the translocation of the substrate across the membrane. The polypeptide is Oligopeptide transport system permease protein AppB (appB) (Bacillus subtilis (strain 168)).